A 225-amino-acid polypeptide reads, in one-letter code: Glutathione S-transferase U3 (225 aa).

A GST N-terminal domain is found at 6–86 (EGVKLIGSWA…YIDQTWTNNP (81 aa)). Glutathione is bound by residues 16-17 (SP), 43-44 (VK), 57-58 (KV), and 70-71 (ES). Positions 91–218 (SPYDKAMARF…EKHIEHMMKI (128 aa)) constitute a GST C-terminal domain. A Phosphothreonine modification is found at T152.

Belongs to the GST superfamily. Tau family.

Its subcellular location is the cytoplasm. The protein localises to the cytosol. The enzyme catalyses RX + glutathione = an S-substituted glutathione + a halide anion + H(+). May be involved in the conjugation of reduced glutathione to a wide number of exogenous and endogenous hydrophobic electrophiles and have a detoxification role against certain herbicides. This Arabidopsis thaliana (Mouse-ear cress) protein is Glutathione S-transferase U3 (GSTU3).